The sequence spans 56 residues: UPF0434 protein WIGBR2520 (56 aa).

Belongs to the UPF0434 family.

This Wigglesworthia glossinidia brevipalpis protein is UPF0434 protein WIGBR2520.